Reading from the N-terminus, the 353-residue chain is Photosystem II protein D1 (353 aa).

Residue Thr-2 is modified to N-acetylthreonine. Thr-2 is modified (phosphothreonine). 3 helical membrane-spanning segments follow: residues 29-46 (YIGW…TATS), 118-133 (HFLL…EWEL), and 142-156 (WIAV…AATA). His-118 serves as a coordination point for chlorophyll a. Tyr-126 is a pheophytin a binding site. Asp-170 and Glu-189 together coordinate [CaMn4O5] cluster. Residues 197 to 218 (FHMLGVAGVFGGSLFSAMHGSL) form a helical membrane-spanning segment. Position 198 (His-198) interacts with chlorophyll a. A quinone contacts are provided by residues His-215 and 264–265 (SF). His-215 is a Fe cation binding site. Position 272 (His-272) interacts with Fe cation. The chain crosses the membrane as a helical span at residues 274-288 (FLAAWPVVGIWFTAL). Residues His-332, Glu-333, Asp-342, and Ala-344 each contribute to the [CaMn4O5] cluster site. The propeptide occupies 345–353 (AVEVPSTNG).

The protein belongs to the reaction center PufL/M/PsbA/D family. In terms of assembly, PSII is composed of 1 copy each of membrane proteins PsbA, PsbB, PsbC, PsbD, PsbE, PsbF, PsbH, PsbI, PsbJ, PsbK, PsbL, PsbM, PsbT, PsbX, PsbY, PsbZ, Psb30/Ycf12, at least 3 peripheral proteins of the oxygen-evolving complex and a large number of cofactors. It forms dimeric complexes. The D1/D2 heterodimer binds P680, chlorophylls that are the primary electron donor of PSII, and subsequent electron acceptors. It shares a non-heme iron and each subunit binds pheophytin, quinone, additional chlorophylls, carotenoids and lipids. D1 provides most of the ligands for the Mn4-Ca-O5 cluster of the oxygen-evolving complex (OEC). There is also a Cl(-1) ion associated with D1 and D2, which is required for oxygen evolution. The PSII complex binds additional chlorophylls, carotenoids and specific lipids. serves as cofactor. Post-translationally, tyr-161 forms a radical intermediate that is referred to as redox-active TyrZ, YZ or Y-Z. C-terminally processed by CTPA; processing is essential to allow assembly of the oxygen-evolving complex and thus photosynthetic growth.

It localises to the plastid. The protein localises to the chloroplast thylakoid membrane. It carries out the reaction 2 a plastoquinone + 4 hnu + 2 H2O = 2 a plastoquinol + O2. Functionally, photosystem II (PSII) is a light-driven water:plastoquinone oxidoreductase that uses light energy to abstract electrons from H(2)O, generating O(2) and a proton gradient subsequently used for ATP formation. It consists of a core antenna complex that captures photons, and an electron transfer chain that converts photonic excitation into a charge separation. The D1/D2 (PsbA/PsbD) reaction center heterodimer binds P680, the primary electron donor of PSII as well as several subsequent electron acceptors. The sequence is that of Photosystem II protein D1 from Eucalyptus globulus subsp. globulus (Tasmanian blue gum).